A 456-amino-acid polypeptide reads, in one-letter code: Bifunctional protein GlmU (456 aa).

The tract at residues 1 to 230 (MDKRFAVVLA…FQETLGVNDR (230 aa)) is pyrophosphorylase. Residues 9–12 (LAAG), Lys23, Gln73, and 78–79 (GT) contribute to the UDP-N-acetyl-alpha-D-glucosamine site. Position 103 (Asp103) interacts with Mg(2+). UDP-N-acetyl-alpha-D-glucosamine contacts are provided by Gly140, Glu155, Asn170, and Asn228. Asn228 contributes to the Mg(2+) binding site. The tract at residues 231 to 251 (VALSQAEIYMKQRINKRHMQN) is linker. The tract at residues 252 to 456 (GVSLIDPDNT…EDYAENIHKK (205 aa)) is N-acetyltransferase. Residues Arg333 and Lys351 each coordinate UDP-N-acetyl-alpha-D-glucosamine. Residue His363 is the Proton acceptor of the active site. Tyr366 and Asn377 together coordinate UDP-N-acetyl-alpha-D-glucosamine. Residues 386–387 (NY), Ala423, and Arg440 each bind acetyl-CoA.

This sequence in the N-terminal section; belongs to the N-acetylglucosamine-1-phosphate uridyltransferase family. In the C-terminal section; belongs to the transferase hexapeptide repeat family. In terms of assembly, homotrimer. Mg(2+) is required as a cofactor.

Its subcellular location is the cytoplasm. It catalyses the reaction alpha-D-glucosamine 1-phosphate + acetyl-CoA = N-acetyl-alpha-D-glucosamine 1-phosphate + CoA + H(+). The enzyme catalyses N-acetyl-alpha-D-glucosamine 1-phosphate + UTP + H(+) = UDP-N-acetyl-alpha-D-glucosamine + diphosphate. It participates in nucleotide-sugar biosynthesis; UDP-N-acetyl-alpha-D-glucosamine biosynthesis; N-acetyl-alpha-D-glucosamine 1-phosphate from alpha-D-glucosamine 6-phosphate (route II): step 2/2. It functions in the pathway nucleotide-sugar biosynthesis; UDP-N-acetyl-alpha-D-glucosamine biosynthesis; UDP-N-acetyl-alpha-D-glucosamine from N-acetyl-alpha-D-glucosamine 1-phosphate: step 1/1. Its pathway is bacterial outer membrane biogenesis; LPS lipid A biosynthesis. Its function is as follows. Catalyzes the last two sequential reactions in the de novo biosynthetic pathway for UDP-N-acetylglucosamine (UDP-GlcNAc). The C-terminal domain catalyzes the transfer of acetyl group from acetyl coenzyme A to glucosamine-1-phosphate (GlcN-1-P) to produce N-acetylglucosamine-1-phosphate (GlcNAc-1-P), which is converted into UDP-GlcNAc by the transfer of uridine 5-monophosphate (from uridine 5-triphosphate), a reaction catalyzed by the N-terminal domain. This is Bifunctional protein GlmU from Bacillus licheniformis (strain ATCC 14580 / DSM 13 / JCM 2505 / CCUG 7422 / NBRC 12200 / NCIMB 9375 / NCTC 10341 / NRRL NRS-1264 / Gibson 46).